Reading from the N-terminus, the 402-residue chain is Putative F-box protein At3g20030 (402 aa).

Residues 1 to 56 (MTMMSDLSQDLLEEILSRVPRTSLGAVRSTCKRWNTLFKDRILCKAEETRDQFRFI) enclose the F-box domain.

The protein is Putative F-box protein At3g20030 of Arabidopsis thaliana (Mouse-ear cress).